The following is a 471-amino-acid chain: MEQQSNLEKDLSVSSFLDEKEKSGYKQSVRLVSNDPSASPAATHKPPFISAALMLLNNTILCISFTIVVPTSERFVQHLGGGNGLSGVIIGLPTITALVLLYPMLRFSTPKAAKGYTIYRRPYTMSCISCIIGHIMYALADKAKSVALILVSRIFTGVACTMFLYHKRYFTDKALISIKYRTSMGVVNSVMATLGLTAGPFIGGLMAKSSMKSQSDIWNEYTSGNWLMAFIWVGLFLFGFACFREVLSPQTDVKEEVVEEKHVINDVKQDTNSKLGFVGCLVIFVVAFSGFSAYFLLNAYQASVPIYTSMLYNYSSFQAGNFLSLAGIINVPLLLIFSYLTRYLTDRDIILLGCCLNIVCMVIHITIHYTGKEFVQPYFIIYTLVFFGSSIANSPSVSLLTKVLHPKYHLIGNVAVQISISLSDTVGAIFGGAFRSFSPVVFFAVCLILNVMSVLALLIIWKKLKVKLRLA.

12 consecutive transmembrane segments (helical) span residues 48–68 (FISA…FTIV), 85–105 (LSGV…YPML), 123–140 (YTMS…YALA), 145–165 (SVAL…MFLY), 186–206 (VVNS…GGLM), 223–243 (SGNW…FACF), 277–297 (FVGC…YFLL), 320–340 (GNFL…FSYL), 349–369 (IILL…TIHY), 379–399 (FIIY…SVSL), 414–434 (VAVQ…GGAF), and 440–460 (VVFF…LLII).

It belongs to the major facilitator superfamily.

The protein localises to the golgi apparatus. It localises to the membrane. This is an uncharacterized protein from Schizosaccharomyces pombe (strain 972 / ATCC 24843) (Fission yeast).